The primary structure comprises 491 residues: Protein nucleotidyltransferase YdiU (491 aa).

Positions 94, 96, 97, 117, 129, 130, 180, and 187 each coordinate ATP. Asp-256 acts as the Proton acceptor in catalysis. The Mg(2+) site is built by Asn-257 and Asp-266. An ATP-binding site is contributed by Asp-266.

This sequence belongs to the SELO family. Requires Mg(2+) as cofactor. The cofactor is Mn(2+).

The catalysed reaction is L-seryl-[protein] + ATP = 3-O-(5'-adenylyl)-L-seryl-[protein] + diphosphate. The enzyme catalyses L-threonyl-[protein] + ATP = 3-O-(5'-adenylyl)-L-threonyl-[protein] + diphosphate. It carries out the reaction L-tyrosyl-[protein] + ATP = O-(5'-adenylyl)-L-tyrosyl-[protein] + diphosphate. It catalyses the reaction L-histidyl-[protein] + UTP = N(tele)-(5'-uridylyl)-L-histidyl-[protein] + diphosphate. The catalysed reaction is L-seryl-[protein] + UTP = O-(5'-uridylyl)-L-seryl-[protein] + diphosphate. The enzyme catalyses L-tyrosyl-[protein] + UTP = O-(5'-uridylyl)-L-tyrosyl-[protein] + diphosphate. Nucleotidyltransferase involved in the post-translational modification of proteins. It can catalyze the addition of adenosine monophosphate (AMP) or uridine monophosphate (UMP) to a protein, resulting in modifications known as AMPylation and UMPylation. This is Protein nucleotidyltransferase YdiU from Alkaliphilus metalliredigens (strain QYMF).